A 673-amino-acid chain; its full sequence is DNA ligase (673 aa).

NAD(+) is bound by residues 33–37 (DHQYD), 83–84 (SL), and Glu117. The active-site N6-AMP-lysine intermediate is the Lys119. 4 residues coordinate NAD(+): Arg140, Glu175, Lys282, and Lys306. 4 residues coordinate Zn(2+): Cys400, Cys403, Cys418, and Cys424. Positions 592–673 (RGSSAISGKT…WVKMVEDARS (82 aa)) constitute a BRCT domain.

Belongs to the NAD-dependent DNA ligase family. LigA subfamily. It depends on Mg(2+) as a cofactor. Mn(2+) serves as cofactor.

It catalyses the reaction NAD(+) + (deoxyribonucleotide)n-3'-hydroxyl + 5'-phospho-(deoxyribonucleotide)m = (deoxyribonucleotide)n+m + AMP + beta-nicotinamide D-nucleotide.. In terms of biological role, DNA ligase that catalyzes the formation of phosphodiester linkages between 5'-phosphoryl and 3'-hydroxyl groups in double-stranded DNA using NAD as a coenzyme and as the energy source for the reaction. It is essential for DNA replication and repair of damaged DNA. This is DNA ligase from Anaplasma marginale (strain St. Maries).